Reading from the N-terminus, the 88-residue chain is Chaplin-F (88 aa).

The signal sequence occupies residues 1–36; it reads MYNPKEHFSMSRIAKGLALTSVAAAAVAGTAGVAAA. Positions 47–87 constitute a Chaplin domain; it reads SPGVLSGNVVQVPVHIPVNVCGNTIDVIGLLNPAFGNECEN. An intrachain disulfide couples cysteine 67 to cysteine 85.

This sequence belongs to the chaplin family. Short chaplin subfamily. As to quaternary structure, homodimer; disulfide linked. About 20% of ChpF isolated from cell wall forms disulfide-bonded homodimers.

The protein localises to the cell surface. The protein resides in the secreted. It localises to the cell wall. It is found in the fimbrium. Its function is as follows. One of 8 partially redundant surface-active proteins required for efficient formation of aerial mycelium; the short chaplins assemble into a hydrophobic, amyloidal fibrillar surface layer that envelopes and protects aerial hyphae and spores, presumably anchored to the long chaplins. Chaplins have an overlapping function with the surface-active SapB peptide; chaplins are essential on minimal medium while on rich medium both chaplins and SapB are required for efficient aerial hyphae formation. Chaplins are also involved in cell attachment to a hydrophobic surface. Forms amyloid fibrils in vitro probably composed of stacked beta-sheets, at low extracellular concentrations individually restores the ability to form aerial hyphae to a chaplin-deficient strain. A small chaplin extract (ChpD, ChpE, ChpF, ChpG and ChpH) self-assembles into 2 different amyloids; small fibrils at the air-water interface form an amphipathic membrane that resembles spore-surface structures involved in aerial hyphae formation, and hydrophilic fibrils in solution that resemble the fibers that attach cells to a hydrophobic surface. At the air-water interface the hydrophilic surface is in contact with water (probably equivalent to the peptidoglycan layer), while the hydrophobic face is exposed to the air, making the surface of the aerial hyphae hydrophobic. A small chaplin extract applied to a chaplin-deficient strain restores aerial hyphae formation. The small chaplin extract forms an amyloid-like structure similar to that seen on the surface of cells without rodlets (rdlA-rdlB deletions), and is highly surface active, reducing surface tension from 72 to 26 mJ/m(2), which probably allows escape of hyphae from an aqueous environment into air. ChpF alone is less surface active at pH 3.0 than at pH 10.0, it reduces the surface tension of water from 72.8 mN/m to 50 mN/m at pH 3.0 or to 37 mN/m at pH 10.0. ChpF and ChpG are sufficient to restore the rodlet layer and hydrophobicity to a strain deleted for the other 6 chaplin genes. The sequence is that of Chaplin-F from Streptomyces coelicolor (strain ATCC BAA-471 / A3(2) / M145).